The following is a 252-amino-acid chain: Small ribosomal subunit protein eS1B (252 aa).

The residue at position 2 (A2) is an N-acetylalanine; partial. At S251 the chain carries Phosphoserine.

This sequence belongs to the eukaryotic ribosomal protein eS1 family. As to quaternary structure, component of the small ribosomal subunit (SSU). Mature yeast ribosomes consist of a small (40S) and a large (60S) subunit. The 40S small subunit contains 1 molecule of ribosomal RNA (18S rRNA) and at least 33 different proteins. The large 60S subunit contains 3 rRNA molecules (25S, 5.8S and 5S rRNA) and at least 46 different proteins. eS1 interacts directly with uS11 and eS26, which form part of the mRNA exit tunnel.

It is found in the cytoplasm. Component of the ribosome, a large ribonucleoprotein complex responsible for the synthesis of proteins in the cell. The small ribosomal subunit (SSU) binds messenger RNAs (mRNAs) and translates the encoded message by selecting cognate aminoacyl-transfer RNA (tRNA) molecules. The large subunit (LSU) contains the ribosomal catalytic site termed the peptidyl transferase center (PTC), which catalyzes the formation of peptide bonds, thereby polymerizing the amino acids delivered by tRNAs into a polypeptide chain. The nascent polypeptides leave the ribosome through a tunnel in the LSU and interact with protein factors that function in enzymatic processing, targeting, and the membrane insertion of nascent chains at the exit of the ribosomal tunnel. The polypeptide is Small ribosomal subunit protein eS1B (rps102) (Schizosaccharomyces pombe (strain 972 / ATCC 24843) (Fission yeast)).